A 145-amino-acid polypeptide reads, in one-letter code: Large ribosomal subunit protein uL14m (145 aa).

Residues 1–30 (MAALTGLWGSFAHVSRAFSQRCFSTSGSLS) constitute a mitochondrion transit peptide.

The protein belongs to the universal ribosomal protein uL14 family. Component of the mitochondrial ribosome large subunit (39S) which comprises a 16S rRNA and about 50 distinct proteins. Interacts with MALSU1.

It is found in the mitochondrion. Its function is as follows. May form part of 2 intersubunit bridges in the assembled ribosome. Upon binding to MALSU1, intersubunit bridge formation is blocked, preventing ribosome formation and repressing translation. The chain is Large ribosomal subunit protein uL14m (Mrpl14) from Mus musculus (Mouse).